The chain runs to 119 residues: Holo-[acyl-carrier-protein] synthase (119 aa).

The Mg(2+) site is built by Asp7 and Glu53.

It belongs to the P-Pant transferase superfamily. AcpS family. Requires Mg(2+) as cofactor.

It is found in the cytoplasm. The enzyme catalyses apo-[ACP] + CoA = holo-[ACP] + adenosine 3',5'-bisphosphate + H(+). Transfers the 4'-phosphopantetheine moiety from coenzyme A to a Ser of acyl-carrier-protein. The polypeptide is Holo-[acyl-carrier-protein] synthase (Dehalococcoides mccartyi (strain ATCC BAA-2266 / KCTC 15142 / 195) (Dehalococcoides ethenogenes (strain 195))).